The sequence spans 670 residues: MESQASENGSQTSSGVTDDYSSWYIEEPLGAEEVQPEGVIPLCQLTAPPALLHACLASLSFLVLLLLALLVRRRRLWPRCGHRGLGLPSPVDFLAGDLSWTVPAAVFVVLFSNLCLLLPDENPLPFLNLTAASSPDGEMETSRGPWKLLALLYYPALYYPLAACASAGHQAAFLLGTVLSWAHFGVQVWQKAECPQDPKIYKHYSLLASLPLLLGLGFLSLWYPVQLVQSLRHRTGAGSQGLQTSYSEKYLRTLLCPKKLDSCSHPASKRSLLSRAWAFSHHSIYTPQPGFRLPLKLVISATLTGTATYQVALLLLVSVVPTVQKVRAGINTDVSYLLAGFGIVLSEDRQEVVELVKHHLWTVEACYISALVLSCASTFLLLIRSLRTHRANLQALHRGAALDLDPPLQSIHPSRQAIVSWMSFCAYQTAFSCLGLLVQQVIFFLGTTSLAFLVFVPLLHGRNLLLLRSLESTWPFWLTVALAVILQNIAANWIFLRTHHGYPELTNRRMLCVATFLLFPINMLVGAIMAVWRVLISSLYNTVHLGQMDLSLLPQRAASLDPGYHTYQNFLRIEASQSHPGVIAFCALLLHAPSPQPRPPLAPQDSLRPAEEEEGMQLLQTKDLMAKGAGHKGSQSRARWGLAYTLLHNPSLQAFRKAALTSAKANGTQP.

Residues 1-50 are Extracellular-facing; it reads MESQASENGSQTSSGVTDDYSSWYIEEPLGAEEVQPEGVIPLCQLTAPPA. N8 carries an N-linked (GlcNAc...) asparagine glycan. The chain crosses the membrane as a helical span at residues 51 to 71; the sequence is LLHACLASLSFLVLLLLALLV. The Cytoplasmic portion of the chain corresponds to 72–97; that stretch reads RRRRLWPRCGHRGLGLPSPVDFLAGD. A helical membrane pass occupies residues 98–118; that stretch reads LSWTVPAAVFVVLFSNLCLLL. At 119–144 the chain is on the extracellular side; sequence PDENPLPFLNLTAASSPDGEMETSRG. N128 carries an N-linked (GlcNAc...) asparagine glycan. The chain crosses the membrane as a helical span at residues 145-165; the sequence is PWKLLALLYYPALYYPLAACA. Residues 166 to 168 are Cytoplasmic-facing; the sequence is SAG. The chain crosses the membrane as a helical span at residues 169 to 189; sequence HQAAFLLGTVLSWAHFGVQVW. The Extracellular portion of the chain corresponds to 190-205; the sequence is QKAECPQDPKIYKHYS. The helical transmembrane segment at 206–226 threads the bilayer; the sequence is LLASLPLLLGLGFLSLWYPVQ. Residues 227 to 296 are Cytoplasmic-facing; sequence LVQSLRHRTG…PQPGFRLPLK (70 aa). The interval 235–294 is interaction with RBP1; it reads TGAGSQGLQTSYSEKYLRTLLCPKKLDSCSHPASKRSLLSRAWAFSHHSIYTPQPGFRLP. The chain crosses the membrane as a helical span at residues 297–317; sequence LVISATLTGTATYQVALLLLV. Residues 318 to 368 are Extracellular-facing; that stretch reads SVVPTVQKVRAGINTDVSYLLAGFGIVLSEDRQEVVELVKHHLWTVEACYI. A helical membrane pass occupies residues 369–389; it reads SALVLSCASTFLLLIRSLRTH. Over 390-423 the chain is Cytoplasmic; sequence RANLQALHRGAALDLDPPLQSIHPSRQAIVSWMS. Residues 424–444 traverse the membrane as a helical segment; it reads FCAYQTAFSCLGLLVQQVIFF. Residues 445-474 are Extracellular-facing; the sequence is LGTTSLAFLVFVPLLHGRNLLLLRSLESTW. Residues 475 to 495 form a helical membrane-spanning segment; the sequence is PFWLTVALAVILQNIAANWIF. The Cytoplasmic segment spans residues 496–510; sequence LRTHHGYPELTNRRM. The helical intramembrane region spans 511–548; the sequence is LCVATFLLFPINMLVGAIMAVWRVLISSLYNTVHLGQM. The Cytoplasmic segment spans residues 549 to 670; it reads DLSLLPQRAA…TSAKANGTQP (122 aa). At Y644 the chain carries Phosphotyrosine.

As to quaternary structure, homodimer. Interacts with JAK2 and STAT5. Interacts (via extracellular domains) with RBP4. Interacts (via cytoplasmic domains) with RBP1. Post-translationally, phosphorylated on tyrosine residues in response to RBP4 binding. Phosphorylation requires the presence of LRAT, suggesting it may be triggered by the uptake of retinol that is then metabolized within the cell to retinoids that function as signaling molecules. Widely expressed in the embryo. Detected in adult in the retinal pigment epithelium in the eye. In the adult, is highly expressed in cells that compose blood-organ barriers in the brain (choroid plexus and the brain microvascular), in testis (the basal layer of the seminiferous epithelium), in the yolk sac, and in the chorioallantoic placenta. Detected in white adipose tissue and skeletal muscle, but not in liver (at protein level). Widely expressed in adult, with high expression levels in the eye. Detected in brain, cerebellum, testis, pituitary, pancreas, kidney, spleen, and female genital tract; and at very low levels in heart and lung. Not detected in liver.

The protein localises to the cell membrane. Functionally, functions as a retinol transporter. Accepts all-trans retinol from the extracellular retinol-binding protein RBP4, facilitates retinol transport across the cell membrane, and then transfers retinol to the cytoplasmic retinol-binding protein RBP1. Retinol uptake is enhanced by LRAT, an enzyme that converts retinol to all-trans retinyl esters, the storage forms of vitamin A. Contributes to the activation of a signaling cascade that depends on retinol transport and LRAT-dependent generation of retinol metabolites that then trigger activation of JAK2 and its target STAT5, and ultimately increase the expression of SOCS3 and inhibit cellular responses to insulin. Important for the homeostasis of vitamin A and its derivatives, such as retinoic acid and 11-cis-retinal. STRA6-mediated transport is particularly important in the eye, and under conditions of dietary vitamin A deficiency. Does not transport retinoic acid. The chain is Receptor for retinol uptake STRA6 (Stra6) from Mus musculus (Mouse).